We begin with the raw amino-acid sequence, 200 residues long: Imidazoleglycerol-phosphate dehydratase (200 aa).

It belongs to the imidazoleglycerol-phosphate dehydratase family.

Its subcellular location is the cytoplasm. It catalyses the reaction D-erythro-1-(imidazol-4-yl)glycerol 3-phosphate = 3-(imidazol-4-yl)-2-oxopropyl phosphate + H2O. It functions in the pathway amino-acid biosynthesis; L-histidine biosynthesis; L-histidine from 5-phospho-alpha-D-ribose 1-diphosphate: step 6/9. This Chlorobium limicola (strain DSM 245 / NBRC 103803 / 6330) protein is Imidazoleglycerol-phosphate dehydratase.